A 67-amino-acid polypeptide reads, in one-letter code: Large ribosomal subunit protein uL29 (67 aa).

This sequence belongs to the universal ribosomal protein uL29 family.

In Ehrlichia canis (strain Jake), this protein is Large ribosomal subunit protein uL29.